The sequence spans 314 residues: uncharacterized protein (314 aa).

2 disordered regions span residues 170–203 and 258–314; these read RSSM…NPDE and VGES…PKKR. Residues 171-186 are compositionally biased toward low complexity; it reads SSMNSQSQMSESSFPT. A compositionally biased stretch (pro residues) spans 187–200; sequence PIDPPPRIPHPPLN. Polar residues predominate over residues 261–272; it reads SSRQGENTQNVH. The span at 289–303 shows a compositional bias: basic and acidic residues; it reads RFKDDARKSNEDEHM.

This is an uncharacterized protein from Arabidopsis thaliana (Mouse-ear cress).